The sequence spans 490 residues: Tandem C2 domains nuclear protein (490 aa).

Residues Ser-83, Ser-156, Ser-168, Ser-174, and Ser-211 each carry the phosphoserine modification. The disordered stretch occupies residues 189–215; the sequence is HDSLSSVPSSSSSRKNSQGSNRSLDTI. Low complexity predominate over residues 192–211; it reads LSSVPSSSSSRKNSQGSNRS. Phosphothreonine is present on residues Thr-214 and Thr-216. Residue Ser-218 is modified to Phosphoserine. 2 C2 domains span residues 223–342 and 344–471; these read DFGR…SLDI and PPSK…NQWK. A Nuclear localization signal motif is present at residues 447–449; it reads RRK.

The protein localises to the nucleus. This Homo sapiens (Human) protein is Tandem C2 domains nuclear protein (TC2N).